The chain runs to 366 residues: Aminomethyltransferase (366 aa).

This sequence belongs to the GcvT family. As to quaternary structure, the glycine cleavage system is composed of four proteins: P, T, L and H.

It catalyses the reaction N(6)-[(R)-S(8)-aminomethyldihydrolipoyl]-L-lysyl-[protein] + (6S)-5,6,7,8-tetrahydrofolate = N(6)-[(R)-dihydrolipoyl]-L-lysyl-[protein] + (6R)-5,10-methylene-5,6,7,8-tetrahydrofolate + NH4(+). Functionally, the glycine cleavage system catalyzes the degradation of glycine. This is Aminomethyltransferase from Chlorobium chlorochromatii (strain CaD3).